Reading from the N-terminus, the 394-residue chain is Elongation factor Tu (394 aa).

Residues 10–204 form the tr-type G domain; that stretch reads KPHVNVGTIG…ALDSYIPTPE (195 aa). A G1 region spans residues 19–26; sequence GHVDHGKT. 19–26 contacts GTP; that stretch reads GHVDHGKT. Thr26 contributes to the Mg(2+) binding site. Residues 60–64 form a G2 region; the sequence is GITIN. Residues 81–84 form a G3 region; the sequence is DCPG. Residues 81–85 and 136–139 each bind GTP; these read DCPGH and NKCD. A G4 region spans residues 136 to 139; it reads NKCD. The G5 stretch occupies residues 174 to 176; it reads SAL.

Belongs to the TRAFAC class translation factor GTPase superfamily. Classic translation factor GTPase family. EF-Tu/EF-1A subfamily. Monomer.

The protein localises to the cytoplasm. The catalysed reaction is GTP + H2O = GDP + phosphate + H(+). In terms of biological role, GTP hydrolase that promotes the GTP-dependent binding of aminoacyl-tRNA to the A-site of ribosomes during protein biosynthesis. The polypeptide is Elongation factor Tu (Neisseria gonorrhoeae (strain ATCC 700825 / FA 1090)).